The primary structure comprises 210 residues: ATP-dependent Clp protease proteolytic subunit (210 aa).

Serine 111 acts as the Nucleophile in catalysis. The active site involves histidine 136.

It belongs to the peptidase S14 family. In terms of assembly, fourteen ClpP subunits assemble into 2 heptameric rings which stack back to back to give a disk-like structure with a central cavity, resembling the structure of eukaryotic proteasomes.

The protein localises to the cytoplasm. It catalyses the reaction Hydrolysis of proteins to small peptides in the presence of ATP and magnesium. alpha-casein is the usual test substrate. In the absence of ATP, only oligopeptides shorter than five residues are hydrolyzed (such as succinyl-Leu-Tyr-|-NHMec, and Leu-Tyr-Leu-|-Tyr-Trp, in which cleavage of the -Tyr-|-Leu- and -Tyr-|-Trp bonds also occurs).. Functionally, cleaves peptides in various proteins in a process that requires ATP hydrolysis. Has a chymotrypsin-like activity. Plays a major role in the degradation of misfolded proteins. The protein is ATP-dependent Clp protease proteolytic subunit of Halorhodospira halophila (strain DSM 244 / SL1) (Ectothiorhodospira halophila (strain DSM 244 / SL1)).